Here is an 815-residue protein sequence, read N- to C-terminus: Probable E3 ubiquitin-protein ligase hulA (815 aa).

The region spanning 1 to 112 is the C2 domain; sequence MGSNLPSQPN…EMGGDEMLTR (112 aa). Disordered regions lie at residues 134–237 and 253–353; these read NLST…GWER and RTTT…YFVD. 2 stretches are compositionally biased toward low complexity: residues 165-185 and 202-212; these read ASAA…SNPS and APGAAAGATPT. Composition is skewed to polar residues over residues 213–226 and 253–270; these read NTQG…SFED and RTTT…QTQR. Residues 229–262 enclose the WW 1 domain; the sequence is GRLPAGWERREDNLGRTYYVDHNTRTTTWTRPSS. Residues 279-294 are compositionally biased toward basic and acidic residues; it reads LERRAHQSRMLPEDRT. The span at 295-308 shows a compositional bias: polar residues; it reads GANSPNLPETSQQA. Residues 324–333 show a composition bias toward low complexity; that stretch reads ATGATTAGTG. WW domains follow at residues 333 to 366 and 393 to 426; these read GELP…DPRR and GPLP…DPRL. The region spanning 482–815 is the HECT domain; sequence SASDLKKRLM…VEETLGFGQE (334 aa). The active-site Glycyl thioester intermediate is C783.

It belongs to the RSP5/NEDD4 family. As to quaternary structure, interacts with creD.

Its subcellular location is the cytoplasm. It catalyses the reaction S-ubiquitinyl-[E2 ubiquitin-conjugating enzyme]-L-cysteine + [acceptor protein]-L-lysine = [E2 ubiquitin-conjugating enzyme]-L-cysteine + N(6)-ubiquitinyl-[acceptor protein]-L-lysine.. The protein operates within protein modification; protein ubiquitination. Functionally, E3 ubiquitin-protein ligase which accepts ubiquitin from an E2 ubiquitin-conjugating enzyme in the form of a thioester and then directly transfers the ubiquitin to targeted substrates. Probably involved in the regulatory network controlling carbon source utilization. This Aspergillus clavatus (strain ATCC 1007 / CBS 513.65 / DSM 816 / NCTC 3887 / NRRL 1 / QM 1276 / 107) protein is Probable E3 ubiquitin-protein ligase hulA (hulA).